The sequence spans 262 residues: Ribose-5-phosphate isomerase A (262 aa).

Residues 33–36, 89–92, and 102–105 contribute to the substrate site; these read TGST, DGAD, and KGGG. Glutamate 111 functions as the Proton acceptor in the catalytic mechanism. Lysine 129 serves as a coordination point for substrate.

Belongs to the ribose 5-phosphate isomerase family. As to quaternary structure, homodimer.

The enzyme catalyses aldehydo-D-ribose 5-phosphate = D-ribulose 5-phosphate. It participates in carbohydrate degradation; pentose phosphate pathway; D-ribose 5-phosphate from D-ribulose 5-phosphate (non-oxidative stage): step 1/1. Its function is as follows. Catalyzes the reversible conversion of ribose-5-phosphate to ribulose 5-phosphate. The chain is Ribose-5-phosphate isomerase A from Cereibacter sphaeroides (strain KD131 / KCTC 12085) (Rhodobacter sphaeroides).